A 766-amino-acid polypeptide reads, in one-letter code: FYVE, RhoGEF and PH domain-containing protein 4 (766 aa).

Residues 1 to 150 (MEESNPAPTS…SSVTNSHDEN (150 aa)) form an actin filament-binding region. Composition is skewed to polar residues over residues 43–65 (STMNLNIPQTPRQHGLTSTTPQK), 132–145 (RNETTTDSASSVTN), and 152–161 (CDSSCRTQGT). Positions 43–167 (STMNLNIPQT…TQGTDLGLPS (125 aa)) are disordered. In terms of domain architecture, DH spans 206–393 (KLHKIATELL…STAASHSNSA (188 aa)). The region spanning 422–521 (ELIKEGQILK…WIKALQESID (100 aa)) is the PH 1 domain. The segment at 559–619 (DNEVTMCMKC…VCKDCYQIMS (61 aa)) adopts an FYVE-type zinc-finger fold. Residues C565, C568, C582, C585, C590, C593, C611, and C614 each contribute to the Zn(2+) site. Positions 643-740 (NSEVCSFLQY…WLKIILLAVT (98 aa)) constitute a PH 2 domain. Phosphoserine is present on residues S702 and S716. The disordered stretch occupies residues 745–766 (DGPSEHLDTLDNLPGPKEKSEC).

In terms of assembly, homooligomer. Detected in brain, lung, liver, skeletal muscle, kidney, testis and cultured hippocampal neurons.

It localises to the cytoplasm. Its subcellular location is the cytoskeleton. The protein resides in the cell projection. The protein localises to the filopodium. Functionally, activates CDC42, a member of the Ras-like family of Rho- and Rac proteins, by exchanging bound GDP for free GTP. Plays a role in regulating the actin cytoskeleton and cell shape. Activates MAPK8. This chain is FYVE, RhoGEF and PH domain-containing protein 4 (Fgd4), found in Rattus norvegicus (Rat).